The chain runs to 720 residues: Engulfment and cell motility protein 3 (720 aa).

The ELMO domain maps to 307 to 479; sequence EQREQLQVLR…VVREQLARTL (173 aa). A PH domain is found at 542 to 664; the sequence is RLCEGTLFRK…TDGLSALLGS (123 aa). The SH3-binding signature appears at 696–706; that stretch reads PERPPPVPPPP.

In terms of assembly, probably interacts directly with the SH3-domain of DOCK1 via its SH3-binding site. Part of a complex with DOCK1 and RAC1. Interacts with ADGRB3.

The protein resides in the cytoplasm. In terms of biological role, involved in cytoskeletal rearrangements required for phagocytosis of apoptotic cells and cell motility. Acts in association with DOCK1 and CRK. Was initially proposed to be required in complex with DOCK1 to activate Rac Rho small GTPases. May enhance the guanine nucleotide exchange factor (GEF) activity of DOCK1. This Homo sapiens (Human) protein is Engulfment and cell motility protein 3 (ELMO3).